The sequence spans 201 residues: Probable chemoreceptor glutamine deamidase CheD (201 aa).

Belongs to the CheD family.

It carries out the reaction L-glutaminyl-[protein] + H2O = L-glutamyl-[protein] + NH4(+). Functionally, probably deamidates glutamine residues to glutamate on methyl-accepting chemotaxis receptors (MCPs), playing an important role in chemotaxis. The polypeptide is Probable chemoreceptor glutamine deamidase CheD (Chlorobium luteolum (strain DSM 273 / BCRC 81028 / 2530) (Pelodictyon luteolum)).